The primary structure comprises 635 residues: Biosynthetic arginine decarboxylase (635 aa).

The residue at position 100 (Lys-100) is an N6-(pyridoxal phosphate)lysine. 282-292 (LDIGGGLGVDY) provides a ligand contact to substrate.

Belongs to the Orn/Lys/Arg decarboxylase class-II family. SpeA subfamily. Requires Mg(2+) as cofactor. The cofactor is pyridoxal 5'-phosphate.

It carries out the reaction L-arginine + H(+) = agmatine + CO2. The protein operates within amine and polyamine biosynthesis; agmatine biosynthesis; agmatine from L-arginine: step 1/1. Catalyzes the biosynthesis of agmatine from arginine. This chain is Biosynthetic arginine decarboxylase (speA), found in Citrifermentans bemidjiense (strain ATCC BAA-1014 / DSM 16622 / JCM 12645 / Bem) (Geobacter bemidjiensis).